The chain runs to 292 residues: Ribosomal protein L11 methyltransferase (292 aa).

Positions 144, 165, 187, and 229 each coordinate S-adenosyl-L-methionine.

The protein belongs to the methyltransferase superfamily. PrmA family.

It localises to the cytoplasm. It carries out the reaction L-lysyl-[protein] + 3 S-adenosyl-L-methionine = N(6),N(6),N(6)-trimethyl-L-lysyl-[protein] + 3 S-adenosyl-L-homocysteine + 3 H(+). Functionally, methylates ribosomal protein L11. The chain is Ribosomal protein L11 methyltransferase from Pseudomonas syringae pv. tomato (strain ATCC BAA-871 / DC3000).